A 122-amino-acid chain; its full sequence is Large ribosomal subunit protein uL14 (122 aa).

It belongs to the universal ribosomal protein uL14 family. In terms of assembly, part of the 50S ribosomal subunit. Forms a cluster with proteins L3 and L19. In the 70S ribosome, L14 and L19 interact and together make contacts with the 16S rRNA in bridges B5 and B8.

Functionally, binds to 23S rRNA. Forms part of two intersubunit bridges in the 70S ribosome. In Bacillus subtilis (strain 168), this protein is Large ribosomal subunit protein uL14.